We begin with the raw amino-acid sequence, 758 residues long: 5-methyltetrahydropteroyltriglutamate--homocysteine methyltransferase (758 aa).

5-methyltetrahydropteroyltri-L-glutamate contacts are provided by residues 17–20 (RELK) and lysine 117. L-homocysteine contacts are provided by residues 434-436 (IGS) and glutamate 487. Residues 434-436 (IGS) and glutamate 487 each bind L-methionine. 5-methyltetrahydropteroyltri-L-glutamate is bound by residues 518-519 (RC) and tryptophan 564. Aspartate 602 contacts L-homocysteine. Aspartate 602 is an L-methionine binding site. Glutamate 608 serves as a coordination point for 5-methyltetrahydropteroyltri-L-glutamate. Zn(2+) contacts are provided by histidine 644, cysteine 646, and glutamate 668. The active-site Proton donor is histidine 697. A Zn(2+)-binding site is contributed by cysteine 729.

This sequence belongs to the vitamin-B12 independent methionine synthase family. Zn(2+) serves as cofactor.

The catalysed reaction is 5-methyltetrahydropteroyltri-L-glutamate + L-homocysteine = tetrahydropteroyltri-L-glutamate + L-methionine. The protein operates within amino-acid biosynthesis; L-methionine biosynthesis via de novo pathway; L-methionine from L-homocysteine (MetE route): step 1/1. Catalyzes the transfer of a methyl group from 5-methyltetrahydrofolate to homocysteine resulting in methionine formation. This Serratia proteamaculans (strain 568) protein is 5-methyltetrahydropteroyltriglutamate--homocysteine methyltransferase.